The following is a 470-amino-acid chain: Sulfate adenylyltransferase subunit 1 (470 aa).

The region spanning 22 to 237 is the tr-type G domain; sequence KEVLRFITCG…LEEVPVKSEE (216 aa). The segment at 31 to 38 is G1; it reads GSVDDGKS. A GTP-binding site is contributed by 31 to 38; sequence GSVDDGKS. The segment at 89–93 is G2; sequence GITID. The G3 stretch occupies residues 110–113; that stretch reads DTPG. GTP-binding positions include 110–114 and 165–168; these read DTPGH and NKMD. Positions 165 to 168 are G4; that stretch reads NKMD. Residues 202–204 form a G5 region; that stretch reads SAK.

The protein belongs to the TRAFAC class translation factor GTPase superfamily. Classic translation factor GTPase family. CysN/NodQ subfamily. In terms of assembly, heterodimer composed of CysD, the smaller subunit, and CysN.

It carries out the reaction sulfate + ATP + H(+) = adenosine 5'-phosphosulfate + diphosphate. It participates in sulfur metabolism; hydrogen sulfide biosynthesis; sulfite from sulfate: step 1/3. In terms of biological role, with CysD forms the ATP sulfurylase (ATPS) that catalyzes the adenylation of sulfate producing adenosine 5'-phosphosulfate (APS) and diphosphate, the first enzymatic step in sulfur assimilation pathway. APS synthesis involves the formation of a high-energy phosphoric-sulfuric acid anhydride bond driven by GTP hydrolysis by CysN coupled to ATP hydrolysis by CysD. The polypeptide is Sulfate adenylyltransferase subunit 1 (Methylorubrum populi (strain ATCC BAA-705 / NCIMB 13946 / BJ001) (Methylobacterium populi)).